Here is a 356-residue protein sequence, read N- to C-terminus: 3-dehydroquinate synthase (356 aa).

NAD(+)-binding positions include 106 to 110 (GVVGD), 130 to 131 (TT), lysine 143, and lysine 152. Zn(2+) contacts are provided by glutamate 185, histidine 248, and histidine 265.

Belongs to the sugar phosphate cyclases superfamily. Dehydroquinate synthase family. It depends on Co(2+) as a cofactor. The cofactor is Zn(2+). NAD(+) serves as cofactor.

Its subcellular location is the cytoplasm. The catalysed reaction is 7-phospho-2-dehydro-3-deoxy-D-arabino-heptonate = 3-dehydroquinate + phosphate. The protein operates within metabolic intermediate biosynthesis; chorismate biosynthesis; chorismate from D-erythrose 4-phosphate and phosphoenolpyruvate: step 2/7. Catalyzes the conversion of 3-deoxy-D-arabino-heptulosonate 7-phosphate (DAHP) to dehydroquinate (DHQ). The chain is 3-dehydroquinate synthase from Thermoanaerobacter sp. (strain X514).